A 515-amino-acid chain; its full sequence is 1-pyrroline-5-carboxylate dehydrogenase (515 aa).

Residues Glu-286 and Cys-320 contribute to the active site.

The protein belongs to the aldehyde dehydrogenase family. RocA subfamily.

It carries out the reaction L-glutamate 5-semialdehyde + NAD(+) + H2O = L-glutamate + NADH + 2 H(+). It functions in the pathway amino-acid degradation; L-proline degradation into L-glutamate; L-glutamate from L-proline: step 2/2. This Bacillus cereus (strain B4264) protein is 1-pyrroline-5-carboxylate dehydrogenase.